A 489-amino-acid chain; its full sequence is Serine/threonine-protein kinase BSK3 (489 aa).

Gly-2 carries the N-myristoyl glycine lipid modification. A Protein kinase domain is found at 58–324 (EYIVSEHGEK…ETEVLSHVLM (267 aa)). ATP is bound by residues 64–72 (HGEKAPNVV) and Lys-86. The active-site Proton acceptor is Asp-180. Residue Ser-212 is modified to Phosphoserine.

This sequence belongs to the protein kinase superfamily. Ser/Thr protein kinase family. Interacts with BRI1. Post-translationally, phosphorylated by BRI1 upon brassinolide (BL) treatment. Phosphorylated by ASK7/BIN2 and ASK9/BIL2.

It is found in the cell membrane. It carries out the reaction L-seryl-[protein] + ATP = O-phospho-L-seryl-[protein] + ADP + H(+). The enzyme catalyses L-threonyl-[protein] + ATP = O-phospho-L-threonyl-[protein] + ADP + H(+). Probable serine/threonine kinase that acts as a positive regulator of brassinosteroid (BR) signaling downstream of the receptor kinase BRI1. Mediates signal transduction from BRI1 by functioning as substrate of BRI1. Functions redundantly with BSK4, BSK6, BSK7 and BSK8. This chain is Serine/threonine-protein kinase BSK3, found in Arabidopsis thaliana (Mouse-ear cress).